Reading from the N-terminus, the 185-residue chain is V-type ATP synthase subunit E (185 aa).

It belongs to the V-ATPase E subunit family.

Produces ATP from ADP in the presence of a proton gradient across the membrane. The polypeptide is V-type ATP synthase subunit E (Deinococcus geothermalis (strain DSM 11300 / CIP 105573 / AG-3a)).